The sequence spans 696 residues: Elongation factor G (696 aa).

Residues 8-282 (DRTRNIGIMA…AVIDYLPSPL (275 aa)) enclose the tr-type G domain. GTP-binding positions include 17–24 (AHIDAGKT), 81–85 (DTPGH), and 135–138 (NKMD).

This sequence belongs to the TRAFAC class translation factor GTPase superfamily. Classic translation factor GTPase family. EF-G/EF-2 subfamily.

The protein localises to the cytoplasm. Functionally, catalyzes the GTP-dependent ribosomal translocation step during translation elongation. During this step, the ribosome changes from the pre-translocational (PRE) to the post-translocational (POST) state as the newly formed A-site-bound peptidyl-tRNA and P-site-bound deacylated tRNA move to the P and E sites, respectively. Catalyzes the coordinated movement of the two tRNA molecules, the mRNA and conformational changes in the ribosome. The chain is Elongation factor G from Staphylococcus saprophyticus subsp. saprophyticus (strain ATCC 15305 / DSM 20229 / NCIMB 8711 / NCTC 7292 / S-41).